The chain runs to 273 residues: Ribosomal RNA small subunit methyltransferase A (273 aa).

S-adenosyl-L-methionine-binding residues include asparagine 18, leucine 20, glycine 45, glutamate 66, aspartate 91, and asparagine 113.

The protein belongs to the class I-like SAM-binding methyltransferase superfamily. rRNA adenine N(6)-methyltransferase family. RsmA subfamily.

Its subcellular location is the cytoplasm. The catalysed reaction is adenosine(1518)/adenosine(1519) in 16S rRNA + 4 S-adenosyl-L-methionine = N(6)-dimethyladenosine(1518)/N(6)-dimethyladenosine(1519) in 16S rRNA + 4 S-adenosyl-L-homocysteine + 4 H(+). Functionally, specifically dimethylates two adjacent adenosines (A1518 and A1519) in the loop of a conserved hairpin near the 3'-end of 16S rRNA in the 30S particle. May play a critical role in biogenesis of 30S subunits. In Escherichia coli O17:K52:H18 (strain UMN026 / ExPEC), this protein is Ribosomal RNA small subunit methyltransferase A.